A 956-amino-acid chain; its full sequence is Run domain Beclin-1-interacting and cysteine-rich domain-containing protein (956 aa).

One can recognise an RUN domain in the interval 49 to 190 (WSKYGGLERL…PRLLAQIDAS (142 aa)). The interval 50–181 (SKYGGLERLC…CLEAVEQNNP (132 aa)) is interaction with PIK3C3. S198 is modified (phosphoserine). An interaction with YWHAB region spans residues 205–437 (SQSLTALPGS…ITIIVEDPIA (233 aa)). Low complexity predominate over residues 233–242 (SLQSMPQSSH). A disordered region spans residues 233-423 (SLQSMPQSSH…TNIASRGAAG (191 aa)). A phosphoserine mark is found at S250 and S268. Over residues 270 to 319 (AETQTTPAPLPSDSTLAQDSPLTAQEMSDSTLTSPLEASWVSSQNDSPSD) the composition is skewed to polar residues. The tract at residues 302–585 (TSPLEASWVS…DLEIQDADIR (284 aa)) is interaction with UVRAG. Positions 339–371 (ASCESHSSNGESSSSHLFSSSSSQKLESAASSL) are enriched in low complexity. The span at 379-395 (QSQAGSVLRRSSFSEGQ) shows a compositional bias: polar residues. Phosphoserine occurs at positions 390, 412, 513, and 547. Residues 490–542 (AIELMKCNMMSQCLEEEEVEEEDSDREIQELKQKIRLRRQQIRTKNLLPAYRE) form an interaction with BECN1 region. Positions 547–566 (SFRVTSSSSQFSSRDSTQLS) are enriched in low complexity. Positions 547 to 579 (SFRVTSSSSQFSSRDSTQLSESGSAEDADDLEI) are disordered. Residues 552-609 (SSSSQFSSRDSTQLSESGSAEDADDLEIQDADIRRSAVSNGKSSFSQNLSHCFLHSTS) form an interaction with CYBA region. Residues 570-579 (SAEDADDLEI) show a composition bias toward acidic residues. S655 bears the Phosphoserine mark. The tract at residues 656–744 (PDDGQHADIY…HENAQMVVPS (89 aa)) is interaction with CARD9. An interaction with Rab7 region spans residues 705-956 (CAGCGIRTDP…ALEATVLETT (252 aa)).

In terms of assembly, associates with PI3K (PI3KC3/PI3K-III/class III phosphatidylinositol 3-kinase) complex II (PI3KC3-C2) in which the core composed of the catalytic subunit PIK3C3, the regulatory subunit PIK3R4 and BECN1 is associated with UVRAG; in the complex interacts directly with PI3KC3 and UVRAG. Interacts with Rab7 (RAB7A or RAB7B) (GTP-bound form); Rab7 and UVRAG compete for RUBCN binding; can interact simultaneously with Rab7 and the PI3K complex. Interacts with CYBA and CYBB; indicative for the association with the CYBA:CYBB NADPH oxidase heterodimer. Interacts with NOX4 and probably associates with the CYBA:NOX4 complex. Interacts with YWHAB and CARD9 in a competitive and stimulation-dependent manner; RUBCN exchanges interaction from YWHAB to CARD9 upon stimulation with beta-1,3-glucan.

It is found in the late endosome. The protein resides in the lysosome. Its subcellular location is the early endosome. Its function is as follows. Inhibits PIK3C3 activity; under basal conditions negatively regulates PI3K complex II (PI3KC3-C2) function in autophagy. Negatively regulates endosome maturation and degradative endocytic trafficking and impairs autophagosome maturation process. Can sequester UVRAG from association with a class C Vps complex (possibly the HOPS complex) and negatively regulates Rab7 activation. In terms of biological role, involved in regulation of pathogen-specific host defense of activated macrophages. Following bacterial infection promotes NADH oxidase activity by association with CYBA thereby affecting TLR2 signaling and probably other TLR-NOX pathways. Stabilizes the CYBA:CYBB NADPH oxidase heterodimer, increases its association with TLR2 and its phagosome trafficking to induce antimicrobial burst of ROS and production of inflammatory cytokines. Following fungal or viral infection (implicating CLEC7A (dectin-1)-mediated myeloid cell activation or RIGI-dependent sensing of RNA viruses) negatively regulates pro-inflammatory cytokine production by association with CARD9 and sequestering it from signaling complexes. The chain is Run domain Beclin-1-interacting and cysteine-rich domain-containing protein from Mus musculus (Mouse).